The sequence spans 316 residues: Tyrosine recombinase XerD (316 aa).

Residues 4–97 (AALQTQLQGY…AVRGLHRFAV (94 aa)) enclose the Core-binding (CB) domain. The Tyr recombinase domain occupies 118 to 309 (RLPKSLTVDE…TVQALREVWA (192 aa)). Active-site residues include Arg-162, Lys-186, His-261, Arg-264, and His-287. Tyr-296 functions as the O-(3'-phospho-DNA)-tyrosine intermediate in the catalytic mechanism.

The protein belongs to the 'phage' integrase family. XerD subfamily. As to quaternary structure, forms a cyclic heterotetrameric complex composed of two molecules of XerC and two molecules of XerD.

The protein resides in the cytoplasm. Functionally, site-specific tyrosine recombinase, which acts by catalyzing the cutting and rejoining of the recombining DNA molecules. The XerC-XerD complex is essential to convert dimers of the bacterial chromosome into monomers to permit their segregation at cell division. It also contributes to the segregational stability of plasmids. This is Tyrosine recombinase XerD from Mycobacterium leprae (strain TN).